Here is a 331-residue protein sequence, read N- to C-terminus: Adenosine deaminase (331 aa).

2 residues coordinate Zn(2+): histidine 12 and histidine 14. 2 residues coordinate substrate: histidine 14 and aspartate 16. Histidine 197 lines the Zn(2+) pocket. Glutamate 200 functions as the Proton donor in the catalytic mechanism. Aspartate 278 serves as a coordination point for Zn(2+).

This sequence belongs to the metallo-dependent hydrolases superfamily. Adenosine and AMP deaminases family. Adenosine deaminase subfamily. Zn(2+) serves as cofactor.

The enzyme catalyses adenosine + H2O + H(+) = inosine + NH4(+). It catalyses the reaction 2'-deoxyadenosine + H2O + H(+) = 2'-deoxyinosine + NH4(+). In terms of biological role, catalyzes the hydrolytic deamination of adenosine and 2-deoxyadenosine. In Shewanella halifaxensis (strain HAW-EB4), this protein is Adenosine deaminase.